We begin with the raw amino-acid sequence, 155 residues long: Ribosomal RNA large subunit methyltransferase H (155 aa).

S-adenosyl-L-methionine is bound by residues Gly-104 and 123 to 128 (LGPMTF).

Belongs to the RNA methyltransferase RlmH family. Homodimer.

It is found in the cytoplasm. The catalysed reaction is pseudouridine(1915) in 23S rRNA + S-adenosyl-L-methionine = N(3)-methylpseudouridine(1915) in 23S rRNA + S-adenosyl-L-homocysteine + H(+). Specifically methylates the pseudouridine at position 1915 (m3Psi1915) in 23S rRNA. The protein is Ribosomal RNA large subunit methyltransferase H of Nitratidesulfovibrio vulgaris (strain DSM 19637 / Miyazaki F) (Desulfovibrio vulgaris).